Here is a 90-residue protein sequence, read N- to C-terminus: UPF0237 protein BL1209.1 (90 aa).

The ACT domain occupies 5-79; sequence IITVVGQDTV…DDIGVRIRCQ (75 aa).

This sequence belongs to the UPF0237 family.

In Bifidobacterium longum (strain NCC 2705), this protein is UPF0237 protein BL1209.1.